The primary structure comprises 261 residues: Hydroxyethylthiazole kinase (261 aa).

Met40 provides a ligand contact to substrate. ATP is bound by residues Lys116 and Thr162. Residue Gly189 participates in substrate binding.

Belongs to the Thz kinase family. It depends on Mg(2+) as a cofactor.

It catalyses the reaction 5-(2-hydroxyethyl)-4-methylthiazole + ATP = 4-methyl-5-(2-phosphooxyethyl)-thiazole + ADP + H(+). Its pathway is cofactor biosynthesis; thiamine diphosphate biosynthesis; 4-methyl-5-(2-phosphoethyl)-thiazole from 5-(2-hydroxyethyl)-4-methylthiazole: step 1/1. In terms of biological role, catalyzes the phosphorylation of the hydroxyl group of 4-methyl-5-beta-hydroxyethylthiazole (THZ). The sequence is that of Hydroxyethylthiazole kinase from Methanosarcina mazei (strain ATCC BAA-159 / DSM 3647 / Goe1 / Go1 / JCM 11833 / OCM 88) (Methanosarcina frisia).